The following is a 75-amino-acid chain: Translation initiation factor IF-1 (75 aa).

The 72-residue stretch at 1–72 (MSKQDLIEME…TKGRITYRLK (72 aa)) folds into the S1-like domain.

The protein belongs to the IF-1 family. In terms of assembly, component of the 30S ribosomal translation pre-initiation complex which assembles on the 30S ribosome in the order IF-2 and IF-3, IF-1 and N-formylmethionyl-tRNA(fMet); mRNA recruitment can occur at any time during PIC assembly.

Its subcellular location is the cytoplasm. In terms of biological role, one of the essential components for the initiation of protein synthesis. Stabilizes the binding of IF-2 and IF-3 on the 30S subunit to which N-formylmethionyl-tRNA(fMet) subsequently binds. Helps modulate mRNA selection, yielding the 30S pre-initiation complex (PIC). Upon addition of the 50S ribosomal subunit IF-1, IF-2 and IF-3 are released leaving the mature 70S translation initiation complex. The sequence is that of Translation initiation factor IF-1 from Synechocystis sp. (strain ATCC 27184 / PCC 6803 / Kazusa).